The following is a 296-amino-acid chain: GTPase Era (296 aa).

The Era-type G domain occupies 7-174 (RTGFVAVVGR…LDEIAARLPE (168 aa)). Residues 15–22 (GRPNVGKS) are G1. 15-22 (GRPNVGKS) is a binding site for GTP. A G2 region spans residues 41–45 (QTTRH). The tract at residues 62 to 65 (DTPG) is G3. Residues 62–66 (DTPGF) and 123–126 (SKID) each bind GTP. The G4 stretch occupies residues 123-126 (SKID). The segment at 153–155 (VSA) is G5. The KH type-2 domain maps to 205–281 (VGDELPYGCT…HLEVYIKVRK (77 aa)).

This sequence belongs to the TRAFAC class TrmE-Era-EngA-EngB-Septin-like GTPase superfamily. Era GTPase family. Monomer.

It localises to the cytoplasm. The protein localises to the cell inner membrane. Its function is as follows. An essential GTPase that binds both GDP and GTP, with rapid nucleotide exchange. Plays a role in 16S rRNA processing and 30S ribosomal subunit biogenesis and possibly also in cell cycle regulation and energy metabolism. This is GTPase Era from Bordetella petrii (strain ATCC BAA-461 / DSM 12804 / CCUG 43448).